The following is a 212-amino-acid chain: Urease accessory protein UreG (212 aa).

Residue 15–22 (GPVGSGKT) participates in GTP binding.

The protein belongs to the SIMIBI class G3E GTPase family. UreG subfamily. In terms of assembly, homodimer. UreD, UreF and UreG form a complex that acts as a GTP-hydrolysis-dependent molecular chaperone, activating the urease apoprotein by helping to assemble the nickel containing metallocenter of UreC. The UreE protein probably delivers the nickel.

The protein localises to the cytoplasm. Its function is as follows. Facilitates the functional incorporation of the urease nickel metallocenter. This process requires GTP hydrolysis, probably effectuated by UreG. This chain is Urease accessory protein UreG, found in Opitutus terrae (strain DSM 11246 / JCM 15787 / PB90-1).